The following is an 81-amino-acid chain: Defensin-like protein 311 (81 aa).

A signal peptide spans 1–24 (MEKISAFFVILFLVSSCLVTMSVG). 3 cysteine pairs are disulfide-bonded: cysteine 27–cysteine 50, cysteine 33–cysteine 57, and cysteine 41–cysteine 59.

This sequence belongs to the DEFL family.

The protein resides in the secreted. This is Defensin-like protein 311 from Arabidopsis thaliana (Mouse-ear cress).